The chain runs to 122 residues: UPF0102 protein VIBHAR_00890 (122 aa).

It belongs to the UPF0102 family.

The polypeptide is UPF0102 protein VIBHAR_00890 (Vibrio campbellii (strain ATCC BAA-1116)).